We begin with the raw amino-acid sequence, 177 residues long: Large ribosomal subunit protein uL5 (177 aa).

It belongs to the universal ribosomal protein uL5 family. Part of the 50S ribosomal subunit; contacts the 5S rRNA and probably tRNA. Forms a bridge to the 30S subunit in the 70S ribosome.

Its function is as follows. This is one of the proteins that bind and probably mediate the attachment of the 5S RNA into the large ribosomal subunit, where it forms part of the central protuberance. In the 70S ribosome it contacts protein S13 of the 30S subunit (bridge B1b), connecting the 2 subunits; this bridge is implicated in subunit movement. May contact the P site tRNA; the 5S rRNA and some of its associated proteins might help stabilize positioning of ribosome-bound tRNAs. This Sulfurisphaera tokodaii (strain DSM 16993 / JCM 10545 / NBRC 100140 / 7) (Sulfolobus tokodaii) protein is Large ribosomal subunit protein uL5.